The chain runs to 74 residues: Protein SOM1, mitochondrial (74 aa).

Component of the mitochondrial inner membrane peptidase (IMP) complex which at least consists of IMP1, IMP2 and SOM1.

Its subcellular location is the mitochondrion inner membrane. Its function is as follows. Non-catalytic component of the mitochondrial inner membrane peptidase (IMP) complex. IMP catalyzes the removal of signal peptides required for the targeting of proteins from the mitochondrial matrix, across the inner membrane, into the inter-membrane space. SOM1 facilitates cleavage of a subset of IMP substrates. This Saccharomyces cerevisiae (strain ATCC 204508 / S288c) (Baker's yeast) protein is Protein SOM1, mitochondrial (SOM1).